Consider the following 280-residue polypeptide: BURP domain protein USPL1 (280 aa).

The first 24 residues, 1–24 (MASTFRLSISFLTLILFSLWVVEA), serve as a signal peptide directing secretion. The region spanning 58–280 (YFTLNDLKLG…PLDNIVWVTK (223 aa)) is the BURP domain.

As to expression, expressed in cotyledons, radicle, floral buds, open flowers, roots and developing seeds, but not in leaves. Highly expressed in the root tips. Detected in young leaves, hypocotyls, stems and mature seed funiculum.

The protein resides in the protein storage vacuole. Its subcellular location is the golgi apparatus. It is found in the golgi stack. The protein localises to the trans-Golgi network. It localises to the prevacuolar compartment. Its function is as follows. Associated with the protein storage vacuole formation. The protein is BURP domain protein USPL1 of Arabidopsis thaliana (Mouse-ear cress).